A 183-amino-acid chain; its full sequence is Adenine phosphoribosyltransferase (183 aa).

The protein belongs to the purine/pyrimidine phosphoribosyltransferase family. Homodimer.

It localises to the cytoplasm. It catalyses the reaction AMP + diphosphate = 5-phospho-alpha-D-ribose 1-diphosphate + adenine. Its pathway is purine metabolism; AMP biosynthesis via salvage pathway; AMP from adenine: step 1/1. Catalyzes a salvage reaction resulting in the formation of AMP, that is energically less costly than de novo synthesis. In Photorhabdus laumondii subsp. laumondii (strain DSM 15139 / CIP 105565 / TT01) (Photorhabdus luminescens subsp. laumondii), this protein is Adenine phosphoribosyltransferase.